We begin with the raw amino-acid sequence, 322 residues long: Protein-L-isoaspartate O-methyltransferase (322 aa).

The interval 1–101 (MSGERAKRFP…AKQGDRSAAP (101 aa)) is disordered. Over residues 14–29 (EDLKREPRKPEGRVAE) the composition is skewed to basic and acidic residues. 2 stretches are compositionally biased toward low complexity: residues 33–51 (AGDA…PAAA) and 67–91 (AANP…PQGG). Residue serine 170 is part of the active site.

It belongs to the methyltransferase superfamily. L-isoaspartyl/D-aspartyl protein methyltransferase family.

Its subcellular location is the cytoplasm. The enzyme catalyses [protein]-L-isoaspartate + S-adenosyl-L-methionine = [protein]-L-isoaspartate alpha-methyl ester + S-adenosyl-L-homocysteine. Functionally, catalyzes the methyl esterification of L-isoaspartyl residues in peptides and proteins that result from spontaneous decomposition of normal L-aspartyl and L-asparaginyl residues. It plays a role in the repair and/or degradation of damaged proteins. This is Protein-L-isoaspartate O-methyltransferase from Burkholderia pseudomallei (strain 668).